Reading from the N-terminus, the 520-residue chain is Putative cytochrome P450 CYP13A4 (520 aa).

Position 464 (Cys464) interacts with heme.

It belongs to the cytochrome P450 family. Heme is required as a cofactor.

Its function is as follows. Cytochromes P450 are a group of heme-thiolate monooxygenases. They oxidize a variety of structurally unrelated compounds, including steroids, fatty acids, and xenobiotics. The sequence is that of Putative cytochrome P450 CYP13A4 (cyp-13A4) from Caenorhabditis elegans.